The primary structure comprises 185 residues: Adenine phosphoribosyltransferase (185 aa).

It belongs to the purine/pyrimidine phosphoribosyltransferase family. Homodimer.

It is found in the cytoplasm. It catalyses the reaction AMP + diphosphate = 5-phospho-alpha-D-ribose 1-diphosphate + adenine. It functions in the pathway purine metabolism; AMP biosynthesis via salvage pathway; AMP from adenine: step 1/1. Catalyzes a salvage reaction resulting in the formation of AMP, that is energically less costly than de novo synthesis. This Rubrobacter xylanophilus (strain DSM 9941 / JCM 11954 / NBRC 16129 / PRD-1) protein is Adenine phosphoribosyltransferase.